Here is a 182-residue protein sequence, read N- to C-terminus: UPF0690 protein C1orf52 homolog (182 aa).

Positions 1–61 (MAAEEKDPLS…AEKRLPGPDE (61 aa)) are disordered. Positions 23 to 32 (SDEEDNSEPE) are enriched in acidic residues. Basic and acidic residues predominate over residues 51 to 61 (KAEKRLPGPDE). Phosphothreonine is present on Thr67. Tyr132 is subject to Phosphotyrosine. The disordered stretch occupies residues 132–182 (YEDNGDDAPQNAKKARLLPEGEETVESDDEKDEHTSKKRKIELGEPTKKKK). Residues 151-162 (EGEETVESDDEK) are compositionally biased toward acidic residues. Phosphoserine is present on Ser158. Over residues 172–182 (IELGEPTKKKK) the composition is skewed to basic and acidic residues.

This sequence belongs to the UPF0690 family.

The protein is UPF0690 protein C1orf52 homolog of Bos taurus (Bovine).